Consider the following 239-residue polypeptide: Norbelladine 4'-O-methyltransferase 4 (239 aa).

Residues V55, E77, 79–80 (GV), S85, D103, and A132 each bind S-adenosyl-L-methionine. D155 is a binding site for a divalent metal cation. D157 is an S-adenosyl-L-methionine binding site. D181 and N182 together coordinate a divalent metal cation.

Belongs to the class I-like SAM-binding methyltransferase superfamily. Cation-dependent O-methyltransferase family. Mg(2+) is required as a cofactor.

It carries out the reaction norbelladine + S-adenosyl-L-methionine = 4'-O-methylnorbelladine + S-adenosyl-L-homocysteine + H(+). Its pathway is alkaloid biosynthesis. Its function is as follows. 4'-O-methyltransferase converting norbelladine to 4'-O-methylnorbelladine. 4'-O-methylnorbelladine is a precursor to all Amaryllidaceae alkaloids such as galanthamine, lycorine and haemanthamine, and including haemanthamine- and crinamine-type alkaloids, promising anticancer agents. The chain is Norbelladine 4'-O-methyltransferase 4 from Narcissus aff. pseudonarcissus MK-2014 (Daffodil).